We begin with the raw amino-acid sequence, 1092 residues long: Isoleucine--tRNA ligase (1092 aa).

The 'HIGH' region signature appears at 53-63 (PFANGLPHYGH). Positions 613-617 (KLSKR) match the 'KMSKS' region motif. K616 lines the ATP pocket.

Belongs to the class-I aminoacyl-tRNA synthetase family. IleS type 2 subfamily. In terms of assembly, monomer. It depends on Zn(2+) as a cofactor.

It is found in the cytoplasm. It carries out the reaction tRNA(Ile) + L-isoleucine + ATP = L-isoleucyl-tRNA(Ile) + AMP + diphosphate. Catalyzes the attachment of isoleucine to tRNA(Ile). As IleRS can inadvertently accommodate and process structurally similar amino acids such as valine, to avoid such errors it has two additional distinct tRNA(Ile)-dependent editing activities. One activity is designated as 'pretransfer' editing and involves the hydrolysis of activated Val-AMP. The other activity is designated 'posttransfer' editing and involves deacylation of mischarged Val-tRNA(Ile). In Rickettsia africae (strain ESF-5), this protein is Isoleucine--tRNA ligase.